The sequence spans 226 residues: UPF0111 protein PH0637 (226 aa).

This sequence belongs to the UPF0111 family.

This is UPF0111 protein PH0637 from Pyrococcus horikoshii (strain ATCC 700860 / DSM 12428 / JCM 9974 / NBRC 100139 / OT-3).